The chain runs to 60 residues: Large ribosomal subunit protein bL32 (60 aa).

The tract at residues 1 to 23 is disordered; that stretch reads MAVPKRKKSKSRRNMHRSHHAIK.

Belongs to the bacterial ribosomal protein bL32 family.

This Wolbachia pipientis subsp. Culex pipiens (strain wPip) protein is Large ribosomal subunit protein bL32.